A 193-amino-acid polypeptide reads, in one-letter code: dCTP deaminase (193 aa).

DCTP contacts are provided by residues 110 to 115 (RSSLAR), Asp-128, 136 to 138 (VLE), Tyr-171, Lys-178, and Gln-182. Glu-138 (proton donor/acceptor) is an active-site residue. The segment at 174-193 (RKSAKYKDQQEAVASRISQD) is disordered.

It belongs to the dCTP deaminase family. As to quaternary structure, homotrimer.

It carries out the reaction dCTP + H2O + H(+) = dUTP + NH4(+). Its pathway is pyrimidine metabolism; dUMP biosynthesis; dUMP from dCTP (dUTP route): step 1/2. In terms of biological role, catalyzes the deamination of dCTP to dUTP. This is dCTP deaminase from Shewanella baltica (strain OS223).